The chain runs to 241 residues: Pyridoxal phosphate phosphatase PHOSPHO2 (241 aa).

Asp8 (nucleophile) is an active-site residue. Positions 8 and 10 each coordinate Mg(2+). Asp10 serves as the catalytic Proton donor. Residues Asp19 and Asp99 each contribute to the substrate site. Asp179 is a binding site for Mg(2+).

It belongs to the HAD-like hydrolase superfamily. PHOSPHO family. Mg(2+) is required as a cofactor.

The enzyme catalyses pyridoxal 5'-phosphate + H2O = pyridoxal + phosphate. Its function is as follows. Phosphatase that has high activity toward pyridoxal 5'-phosphate (PLP). Also active at much lower level toward pyrophosphate, phosphoethanolamine (PEA), phosphocholine (PCho), phospho-l-tyrosine, fructose-6-phosphate, p-nitrophenyl phosphate, and h-glycerophosphate. This chain is Pyridoxal phosphate phosphatase PHOSPHO2 (PHOSPHO2), found in Bos taurus (Bovine).